The chain runs to 58 residues: Attractin (58 aa).

Cystine bridges form between Cys-4–Cys-41, Cys-13–Cys-33, and Cys-20–Cys-26. N-linked (GlcNAc...) asparagine glycosylation occurs at Asn-8.

Produced by the albumen gland of the egg cordons.

It localises to the secreted. Water-borne pheromone that attract the marine mollusk Aplysia into breeding aggregations and coordinate male and female reproductive behavior within the aggregation. The protein is Attractin (ATT) of Aplysia fasciata (Mottled sea hare).